Reading from the N-terminus, the 280-residue chain is Borealin (280 aa).

The span at 140-153 (KVAAKKPSTARRTR) shows a compositional bias: basic residues. A disordered region spans residues 140 to 187 (KVAAKKPSTARRTRASVGNVANTSKRTSKRGRATPSASKQAETSLLGY).

Belongs to the borealin family. In terms of assembly, component of the CPC at least composed of survivin/birc5, incenp, cdca8/borealin and/or cdca9/dasra-A, and aurkb/aurora-B. Interacts with incenp (via N-terminus).

The protein localises to the nucleus. Its subcellular location is the chromosome. It localises to the centromere. It is found in the cytoplasm. The protein resides in the cytoskeleton. The protein localises to the spindle. Its function is as follows. Component of the chromosomal passenger complex (CPC), a complex that acts as a key regulator of mitosis. The CPC complex has essential functions at the centromere in ensuring correct chromosome alignment and segregation and is required for chromatin-induced microtubule stabilization and spindle assembly. Contributes to CPC function by facilitating loading of the CPC onto chromosomes. This Xenopus laevis (African clawed frog) protein is Borealin (cdca8).